A 224-amino-acid chain; its full sequence is Phosphoribosylformylglycinamidine synthase subunit PurQ (224 aa).

In terms of domain architecture, Glutamine amidotransferase type-1 spans 4 to 224 (RIGVVTFPGT…YSALDAVLTG (221 aa)). The Nucleophile role is filled by Cys87. Active-site residues include His195 and Glu197.

In terms of assembly, part of the FGAM synthase complex composed of 1 PurL, 1 PurQ and 2 PurS subunits.

It is found in the cytoplasm. It catalyses the reaction N(2)-formyl-N(1)-(5-phospho-beta-D-ribosyl)glycinamide + L-glutamine + ATP + H2O = 2-formamido-N(1)-(5-O-phospho-beta-D-ribosyl)acetamidine + L-glutamate + ADP + phosphate + H(+). It carries out the reaction L-glutamine + H2O = L-glutamate + NH4(+). It participates in purine metabolism; IMP biosynthesis via de novo pathway; 5-amino-1-(5-phospho-D-ribosyl)imidazole from N(2)-formyl-N(1)-(5-phospho-D-ribosyl)glycinamide: step 1/2. In terms of biological role, part of the phosphoribosylformylglycinamidine synthase complex involved in the purines biosynthetic pathway. Catalyzes the ATP-dependent conversion of formylglycinamide ribonucleotide (FGAR) and glutamine to yield formylglycinamidine ribonucleotide (FGAM) and glutamate. The FGAM synthase complex is composed of three subunits. PurQ produces an ammonia molecule by converting glutamine to glutamate. PurL transfers the ammonia molecule to FGAR to form FGAM in an ATP-dependent manner. PurS interacts with PurQ and PurL and is thought to assist in the transfer of the ammonia molecule from PurQ to PurL. This is Phosphoribosylformylglycinamidine synthase subunit PurQ from Mycobacterium bovis (strain ATCC BAA-935 / AF2122/97).